Reading from the N-terminus, the 156-residue chain is Small ribosomal subunit protein uS7c (156 aa).

Belongs to the universal ribosomal protein uS7 family. Part of the 30S ribosomal subunit.

The protein localises to the plastid. Its subcellular location is the chloroplast. Functionally, one of the primary rRNA binding proteins, it binds directly to 16S rRNA where it nucleates assembly of the head domain of the 30S subunit. This Guillardia theta (Cryptophyte) protein is Small ribosomal subunit protein uS7c (rps7).